A 181-amino-acid chain; its full sequence is Oligoribonuclease (181 aa).

Residues leucine 8–leucine 171 enclose the Exonuclease domain. Residue tyrosine 129 is part of the active site.

This sequence belongs to the oligoribonuclease family.

The protein resides in the cytoplasm. Its function is as follows. 3'-to-5' exoribonuclease specific for small oligoribonucleotides. This Shewanella loihica (strain ATCC BAA-1088 / PV-4) protein is Oligoribonuclease.